The chain runs to 95 residues: Large ribosomal subunit protein bL25 (95 aa).

Belongs to the bacterial ribosomal protein bL25 family. Part of the 50S ribosomal subunit; part of the 5S rRNA/L5/L18/L25 subcomplex. Contacts the 5S rRNA. Binds to the 5S rRNA independently of L5 and L18.

This is one of the proteins that binds to the 5S RNA in the ribosome where it forms part of the central protuberance. This chain is Large ribosomal subunit protein bL25, found in Shewanella pealeana (strain ATCC 700345 / ANG-SQ1).